The following is a 210-amino-acid chain: Thymidylate kinase (210 aa).

Residue 11–18 (GLEGAGKS) coordinates ATP.

It belongs to the thymidylate kinase family.

It carries out the reaction dTMP + ATP = dTDP + ADP. In terms of biological role, phosphorylation of dTMP to form dTDP in both de novo and salvage pathways of dTTP synthesis. This chain is Thymidylate kinase, found in Histophilus somni (strain 129Pt) (Haemophilus somnus).